The sequence spans 140 residues: Large ribosomal subunit protein bL17 (140 aa).

Belongs to the bacterial ribosomal protein bL17 family. In terms of assembly, part of the 50S ribosomal subunit. Contacts protein L32.

This is Large ribosomal subunit protein bL17 from Beijerinckia indica subsp. indica (strain ATCC 9039 / DSM 1715 / NCIMB 8712).